Reading from the N-terminus, the 265-residue chain is Vegetative storage protein 2 (265 aa).

The signal sequence occupies residues Met1–Ala18. N-linked (GlcNAc...) asparagine glycans are attached at residues Asn110, Asn188, and Asn210.

This sequence belongs to the APS1/VSP family. Highly expressed in flowers, but also found in leaves, vegetative shoots, petioles, peduncles, and receptacles of floral organs.

Its function is as follows. May function as somatic storage protein during early seedling development. The sequence is that of Vegetative storage protein 2 (VSP2) from Arabidopsis thaliana (Mouse-ear cress).